Here is a 289-residue protein sequence, read N- to C-terminus: Lipoyl synthase 1 (289 aa).

Residues C33, C38, C44, C59, C63, C66, and S274 each coordinate [4Fe-4S] cluster. Positions 45–263 (FAGGTATFLI…RIGEEELGFL (219 aa)) constitute a Radical SAM core domain.

This sequence belongs to the radical SAM superfamily. Lipoyl synthase family. [4Fe-4S] cluster is required as a cofactor.

Its subcellular location is the cytoplasm. The enzyme catalyses [[Fe-S] cluster scaffold protein carrying a second [4Fe-4S](2+) cluster] + N(6)-octanoyl-L-lysyl-[protein] + 2 oxidized [2Fe-2S]-[ferredoxin] + 2 S-adenosyl-L-methionine + 4 H(+) = [[Fe-S] cluster scaffold protein] + N(6)-[(R)-dihydrolipoyl]-L-lysyl-[protein] + 4 Fe(3+) + 2 hydrogen sulfide + 2 5'-deoxyadenosine + 2 L-methionine + 2 reduced [2Fe-2S]-[ferredoxin]. It participates in protein modification; protein lipoylation via endogenous pathway; protein N(6)-(lipoyl)lysine from octanoyl-[acyl-carrier-protein]: step 2/2. Functionally, catalyzes the radical-mediated insertion of two sulfur atoms into the C-6 and C-8 positions of the octanoyl moiety bound to the lipoyl domains of lipoate-dependent enzymes, thereby converting the octanoylated domains into lipoylated derivatives. The polypeptide is Lipoyl synthase 1 (Parasynechococcus marenigrum (strain WH8102)).